A 378-amino-acid chain; its full sequence is Prolargin (378 aa).

Positions 1–21 (MRASFFWLLPLLLILASVAQG) are cleaved as a signal peptide. Residues 22–62 (QPTRPKPGIRRKPKPRPTPRFPQAPEPAEPTDLPPPLPPGP) form a disordered region. Basic residues predominate over residues 28-38 (PGIRRKPKPRP). Residues 39–62 (TPRFPQAPEPAEPTDLPPPLPPGP) are compositionally biased toward pro residues. LRR repeat units follow at residues 91–110 (RRVP…NNFI), 111–134 (TELP…NNRI), 135–158 (RKVD…KNQL), 159–179 (EEVP…QNLI), 180–203 (SRIP…HNRL), 204–229 (SDGV…HNIL), 230–250 (RKMP…SNKI), 251–274 (ETIP…YNKL), 275–299 (SDRG…HNKI), 300–319 (SNVP…NNSI), 320–358 (EKIN…GNFL), and 359–378 (KPPI…SVVI). Asparagine 120 is a glycosylation site (N-linked (GlcNAc...) asparagine). N-linked (GlcNAc...) asparagine glycans are attached at residues asparagine 285, asparagine 316, and asparagine 323. Cysteines 328 and 369 form a disulfide.

Belongs to the small leucine-rich proteoglycan (SLRP) family. SLRP class II subfamily. In terms of assembly, binds the basement membrane heparan sulfate proteoglycan perlecan and triple helical collagens type I and type II. In terms of processing, glycosylated; contains heparan sulfate. In terms of tissue distribution, expressed in cartilage throughout both fetal development and postnatal life. It is also expressed in the developing embryo prior to skeletogenesis. In adult, highest expression in lung, lower levels in cardiac and skeletal muscle.

The protein localises to the secreted. It localises to the extracellular space. It is found in the extracellular matrix. Functionally, may anchor basement membranes to the underlying connective tissue. The sequence is that of Prolargin (Prelp) from Mus musculus (Mouse).